Reading from the N-terminus, the 520-residue chain is GMP synthase [glutamine-hydrolyzing] (520 aa).

The region spanning 12–205 is the Glutamine amidotransferase type-1 domain; that stretch reads KIIVLDYGSQ…AISICGGRGD (194 aa). The active-site Nucleophile is the cysteine 89. Catalysis depends on residues histidine 179 and glutamate 181. The GMPS ATP-PPase domain occupies 206-395; the sequence is WSMDNFIDMQ…LGMPDEVVWR (190 aa). Residue 233–239 coordinates ATP; that stretch reads SGGVDSS.

In terms of assembly, homodimer.

It catalyses the reaction XMP + L-glutamine + ATP + H2O = GMP + L-glutamate + AMP + diphosphate + 2 H(+). The protein operates within purine metabolism; GMP biosynthesis; GMP from XMP (L-Gln route): step 1/1. Functionally, catalyzes the synthesis of GMP from XMP. This Streptococcus equi subsp. equi (strain 4047) protein is GMP synthase [glutamine-hydrolyzing].